A 479-amino-acid polypeptide reads, in one-letter code: Sucrose-6-phosphate hydrolase (479 aa).

The segment at 1 to 28 (MTAHDQELRRRAYEEVEKKEPIANSDPH) is disordered. Substrate is bound by residues 40–43 (LLND), Gln-59, 102–103 (YS), 161–162 (RD), and Glu-220. Asp-43 is an active-site residue.

The protein belongs to the glycosyl hydrolase 32 family.

It carries out the reaction Hydrolysis of terminal non-reducing beta-D-fructofuranoside residues in beta-D-fructofuranosides.. It participates in glycan biosynthesis; sucrose metabolism. This chain is Sucrose-6-phosphate hydrolase (sacA), found in Bacillus subtilis (strain 168).